The following is a 468-amino-acid chain: ATP synthase subunit beta (468 aa).

ATP is bound at residue 155-162 (GGAGVGKT).

Belongs to the ATPase alpha/beta chains family. F-type ATPases have 2 components, CF(1) - the catalytic core - and CF(0) - the membrane proton channel. CF(1) has five subunits: alpha(3), beta(3), gamma(1), delta(1), epsilon(1). CF(0) has three main subunits: a(1), b(2) and c(9-12). The alpha and beta chains form an alternating ring which encloses part of the gamma chain. CF(1) is attached to CF(0) by a central stalk formed by the gamma and epsilon chains, while a peripheral stalk is formed by the delta and b chains.

The protein localises to the cell inner membrane. The catalysed reaction is ATP + H2O + 4 H(+)(in) = ADP + phosphate + 5 H(+)(out). In terms of biological role, produces ATP from ADP in the presence of a proton gradient across the membrane. The catalytic sites are hosted primarily by the beta subunits. This chain is ATP synthase subunit beta, found in Thermotoga petrophila (strain ATCC BAA-488 / DSM 13995 / JCM 10881 / RKU-1).